The primary structure comprises 122 residues: Large ribosomal subunit protein uL14 (122 aa).

It belongs to the universal ribosomal protein uL14 family. In terms of assembly, part of the 50S ribosomal subunit. Forms a cluster with proteins L3 and L19. In the 70S ribosome, L14 and L19 interact and together make contacts with the 16S rRNA in bridges B5 and B8.

Its function is as follows. Binds to 23S rRNA. Forms part of two intersubunit bridges in the 70S ribosome. The sequence is that of Large ribosomal subunit protein uL14 from Chlorobium luteolum (strain DSM 273 / BCRC 81028 / 2530) (Pelodictyon luteolum).